Here is a 186-residue protein sequence, read N- to C-terminus: Transcription factor HES-3 (186 aa).

Residues 1–49 (MEKKRRARINVSLEQLKSLLEKHYSHQIRKRKLEKADILELSVKYMRSL) form the bHLH domain. The Orange domain occupies 65–99 (QPSGFRSCLPGVSQLLRRGDEVGSGLRCPLVPESA). The tract at residues 128–186 (APAAGGPRSPPPLLLLPESLPGSSASVPPPQPASSRCAESPGLGLRVWRPWGSPGDDLN) is disordered. The segment covering 142–153 (LLPESLPGSSAS) has biased composition (low complexity). The short motif at 175 to 178 (WRPW) is the WRPW motif element.

Transcription repression requires formation of a complex with a corepressor protein of the Groucho/TLE family.

The protein localises to the nucleus. In terms of biological role, transcriptional repressor of genes that require a bHLH protein for their transcription. The sequence is that of Transcription factor HES-3 (HES3) from Homo sapiens (Human).